The following is a 528-amino-acid chain: Na(+)/H(+) antiporter NhaB (528 aa).

11 helical membrane-spanning segments follow: residues 23-43 (VAII…NPFV), 45-65 (GWLL…CYPL), 90-110 (LVAN…IYFM), 136-156 (CFAA…AVVI), 204-224 (LLMH…VGEP), 237-257 (FGEF…CGLI), 305-325 (GIIA…VGLI), 350-370 (EEAL…AVII), 392-412 (LALF…VFVG), 450-470 (ATPN…APLI), and 479-499 (VMAL…IMFF).

It belongs to the NhaB Na(+)/H(+) (TC 2.A.34) antiporter family.

Its subcellular location is the cell inner membrane. It catalyses the reaction 2 Na(+)(in) + 3 H(+)(out) = 2 Na(+)(out) + 3 H(+)(in). Its function is as follows. Na(+)/H(+) antiporter that extrudes sodium in exchange for external protons. Can also transport lithium and potassium. In Vibrio parahaemolyticus serotype O3:K6 (strain RIMD 2210633), this protein is Na(+)/H(+) antiporter NhaB.